Reading from the N-terminus, the 383-residue chain is Succinyl-diaminopimelate desuccinylase (383 aa).

A Zn(2+)-binding site is contributed by H74. D76 is an active-site residue. D107 provides a ligand contact to Zn(2+). The active-site Proton acceptor is E141. 3 residues coordinate Zn(2+): E142, E170, and H356.

This sequence belongs to the peptidase M20A family. DapE subfamily. As to quaternary structure, homodimer. It depends on Zn(2+) as a cofactor. Requires Co(2+) as cofactor.

It carries out the reaction N-succinyl-(2S,6S)-2,6-diaminopimelate + H2O = (2S,6S)-2,6-diaminopimelate + succinate. The protein operates within amino-acid biosynthesis; L-lysine biosynthesis via DAP pathway; LL-2,6-diaminopimelate from (S)-tetrahydrodipicolinate (succinylase route): step 3/3. In terms of biological role, catalyzes the hydrolysis of N-succinyl-L,L-diaminopimelic acid (SDAP), forming succinate and LL-2,6-diaminopimelate (DAP), an intermediate involved in the bacterial biosynthesis of lysine and meso-diaminopimelic acid, an essential component of bacterial cell walls. The polypeptide is Succinyl-diaminopimelate desuccinylase (Ralstonia nicotianae (strain ATCC BAA-1114 / GMI1000) (Ralstonia solanacearum)).